The sequence spans 217 residues: Homologous-pairing protein 2 homolog (217 aa).

Residues 84 to 152 (ADLHGLDASI…RLKNIKAATN (69 aa)) are a coiled coil. The interval 118-182 (TSALTTPEMQ…WRKRKRMTTE (65 aa)) is DNA-binding.

The protein belongs to the HOP2 family. Interacts with the DNA-binding domain of the nuclear receptors NR3C1/GR, ESR2/ER-beta, THRB and RXRA. Forms a stable heterodimer with MND1. Interacts with PSMC3/TBP1. Phosphorylated by PKA, PKC and MAPK. In terms of tissue distribution, highly expressed in testis and more specifically in spermatocytes. Detected in spleen, ovary and thymus.

Its subcellular location is the nucleus. Its function is as follows. Plays an important role in meiotic recombination. Stimulates DMC1-mediated strand exchange required for pairing homologous chromosomes during meiosis. The complex PSMC3IP/MND1 binds DNA, stimulates the recombinase activity of DMC1 as well as DMC1 D-loop formation from double-strand DNA. This complex stabilizes presynaptic RAD51 and DMC1 filaments formed on single strand DNA to capture double-strand DNA. This complex stimulates both synaptic and presynaptic critical steps in RAD51 and DMC1-promoted homologous pairing. May inhibit HIV-1 viral protein TAT activity and modulate the activity of proteasomes through association with PSMC3. The chain is Homologous-pairing protein 2 homolog (Psmc3ip) from Mus musculus (Mouse).